Here is a 3375-residue protein sequence, read N- to C-terminus: MKRSSTVLAALLALLLVATNDAARHRKYRQTYQDIDSDDDDTSDVQITVFPSEKEVRDGRDVSFECRARTSDNSVYPTVRWARVGGPLPSSAHDSGGRLTINPVQLSDAGTYICVSDYNGNTVEARATLSVVSYGPQEVSNGLRQAGQCMADEKACGNNECVKNDYVCDGEPDCRDRSDEANCPAISRTCEPNEFKCNNNKCVQKMWLCDGDDDCGDNSDELNCNAKPSSSDCKPTEFQCHDRRQCVPSSFHCDGTNDCHDGSDEVGCVQPTVVDPPQTNLQVPRGTTFSLTCKAVAVPEPYINWRLNWGPVCEPPRCLQTSEGGYGTLTIHDAQPVDQGAYTCEAINVKGRVLATPDCIVRVVDDPRPQPPQPPTAPPQRASCDTRGAVTPYPNNYGTCECKSQVTGPNCDQCKPGAFHLSEKSPEGCLKCFCFGVSNDCRSSGHYRTKDRLMFAGDAEGVTISDIEERTIDRNTPFSFFKTGYLTFDGTTDGVAKYWRLPQRFLGDKVTAYGGKMEFEIEFSGSGHHSSEPMVVLKGNQNILVHRVRNQEHVLRSDSPVRITVETYETNYEQLNGAAATREDLLMVLADLDAFLIRATHVAHQTSTSLGDVSWEIAVDRYTPDGLALEVEQCVCPPGYLGTSCEDCAPGYERSGYGPYLGTCVPIQPRHQQCGPGAVAPTAPAQGQCQCKASVIGPNCDRCAPNSFGLAPTNPQGCIPCFCSGVTQQCSASSYRRTSVSIDYARGDRDQLELTTSDSRQPYSPQTRAELSGQAIEFRSFEEARGQTLYWKLPEKFLGDKVTSYGGTLEYTFKFSGNGNSDQSADVILRGNDIALQYKHREPFYADRENKVQIKIIETSWQRVDGQQATREHLLMTLADLDTLLIKSTYNDDCTDSQLLSANLEFAEPYGQGLTAAEVEQCICPPGYVGTSCEDCAPGYSRTGGGLYLGLCEKCECNGHASQCDKEYGYCLDCQHNTEGDQCERCKPGFVGDARRGTPNDCQPEATRAPCHCNNHSPRGCDSFGRCLLCEHNTEGTHCERCKKGYYGDATKGSPYDCTPCPCPGASDCYLDNEGQVACRICPAGLQGRLCNECAPGYTRSNKPAGRVCEPIGQVTNEDITFVQKPHEVLRVRIMEPKRQIALPGDRVHWICQVTGYTTEKIHVEWTKVGEMSLPPNAKAYDGYLVLKGVEAENAGQYRCTATTITQYATDDALLTISKRISGRPPQPVIDPPHLVVNEGEPAAFRCWVPGIPDCQITWHREQLGGPLPHGVYQTGNALKIPQSQLHHAGRYICSAANQYGTGQSPPAVLEVKKPVIPPKVDPIRQTVDRDQPARFKCWVPGNSNVQLRWSRPGGAPLPSGVQEQQGILHIPRASDQEVGQYVCTATDPSDNTPLQSEPVQLNIRDPAPPQRGAAPQIDPPNQTVNVNDPAQFRCWVPGQPRAQLKWSRKDGRPLPNGILERDGFLRIDKSQLHDAGEYECTSTEPDGSTQLSPPARLNVNQPQAIQPQVDPPVQTVNEGEPSRIRCWVPGHPNIQLQFVKRGRRPLPAHARFSQGNLEIPRTLKSDEDEYICIATDPTTNRPVESNPARVIVKSPIRPIIDPAEQTVPEGSPFKIRCYVPGHPSVQLTFRRVSGQLNEDADENNGLLAVQRAELTDEGDYICTARDPDTGAPIDSTPATVHVTNAAAPPQVEARPPQHPVITPQTQTIPEGDPARIQCTVPGNPSAAQHLSFERVDGKGLPFGSSDDRGVLTIPSTQLQDAGEYVCLYSPENSPPVKTNPSTLNVTPEGTPPRPVATPPLLSVAPGSPARFNCVAHSDTPARIRWGFREENGPLPEHVNQDGDDIVISEAGDRNVGEYVCSATNDFGTGVADPVRLEVTEDQEPPTAVVEPRTWNGKPGERHQFRCITTGSPTPKITWTGPNGSPLPHDVTPLEPNILDFSNGRSELNGDYTCTASNPIGEASDHGNVNIGPSLTVKTNPPGPKLIVTVGEPLQVKCEAFGAPGDPEPEVEWLHDPGPERGDLPDDFKPVTISEQFIRHPNVGLGNAGVYTCKGSSAHATATKNIYIEVVEPSRIATVSILGGSSQWFDQGEKGELICTATGSSLVDRLEWEKVDDQLPTDVEEHNEPGLLHFPSFKNSYAGEYRCNGYRNNEIIASAAVHVHSSANADDEPKVEIEPPRVRVVSQGDNIVLKCSVQGAENGEHFKWALLRGGSLVRQLGTEPTLEITKADPSNDFGVYRCNVEDNNGLVIGSAFTAVSVGQQDKSHAQIVKFDDKSDASFTCPIYSVPGSKVDWTYENGDLPSKAVPNGNKIEIKEFDDASAGTYVCKVSFDGNVVEGFVTAQMFVPDTIIQVLLEVSSESPQIGDRAWFDCKVTGDPSAVISWTKEGNDDLPPNAQVTGGRLLFTDLKEDNAGVYRCVAKTKAGPLQTRTVLNVGSGKQDQVTFTVADSLPVVYTVGQPAYLSCIGKTETKPNQSVVWTKEEGDLPSGSRVEQGVLMLPSVHRDDEGSYTCEIVKEENPVFSTVDLQIDDFIPVIDGEPIELPPLSDEEIVNLDIEITLNTANPKGIIFETKRINSGDLLATPYDTIHHEAKITDYGTVLYEFDIGNGRQIVETTNPINPNEWNVIKIKNDKNQVTIQLNDESATIRQHTNPLPSLSTGVNRPVFIGGRHEPTNEANDFRGIISQVVLSGHNVGLGDARIPSSVVKYDACASTNLCLNGANCRNANNHHGFSCECAEEFHGEYCQWRSNSCHDESCNTGICLDNEESWQCVCPLGTTGLRCEEKTEIPQPLGFTSDTSFLAVKRPVKFESIKMKLRPQADSDEHILMYFASDYGSNTKQYTSLSLIANQVVLTVRRPDKEVQKIRSETLEAGELIDVAVRQAGNALVMTVDGNQVSTIETDTLKPGTEIFIGGLPPGLNSPDDVVEQSFQGCVYEILINSQDVDLQNLSSSGDISSCEESQFPVEEDDTTTTTTTEEPEAVIEEPTTEEPTTTEEPITEEPTEEPTTTEEPTTTEEPTTTTEEPTTTTTEEPYHIYETSRDDDPEIIIPVETTTTSTTTTSTTEEPEAEPALVLPTDPVEENDVSDEEEEISTISTVSPDNGLDSDSDYSEGTLPPDSSSEEIVVGDVYSTQEPNNICANSTCGMNGQCVPRNMTHYTCECKLYYDGPTCSLFKPIEHAARFDGDAFIELSSDEFPHLTSEKDEIVAFKFKTEQQNGVLLWQGQRPTVQQMEDYISVGIVNGHLHFSYELGGGAAHLISEERVDDGKEHSVRFERKGREGQMRIDNYREVDGRSTGILAMLNVDGNIFVGGVPDISKATGGLFSNNFVGCIADVELNGVKLDLMATAIDGKNVKPCDEWMHRKRWLYRRRVR.

The first 22 residues, M1–A22, serve as a signal peptide directing secretion. In terms of domain architecture, Ig-like C2-type 1 spans V45–S130. 11 disulfides stabilise this stretch: C66-C114, C149-C161, C156-C174, C168-C183, C190-C202, C197-C215, C209-C224, C233-C246, C240-C259, C253-C268, and C293-C344. LDL-receptor class A domains are found at residues Q148–P184, T189–N225, and D232–V269. The Ig-like C2-type 2 domain maps to P271–A355. The disordered stretch occupies residues V364–D385. A compositionally biased stretch (pro residues) spans P369–P378. Cystine bridges form between C384–C400, C402–C411, and C414–C429. Residues C384–K431 enclose the Laminin EGF-like 1; truncated domain. Residues C432–C441 form the Laminin EGF-like 2; first part domain. Residues K450–Q633 enclose the Laminin IV type A 1 domain. 4 disulfide bridges follow: C634-C648, C636-C689, C691-C700, and C703-C718. The Laminin EGF-like 2; second part domain occupies C634–P666. Positions C674–P720 constitute a Laminin EGF-like 3; truncated domain. The Laminin EGF-like 4; first part domain maps to C721–C730. One can recognise a Laminin IV type A 2 domain in the interval V740 to Q921. In terms of domain architecture, Laminin EGF-like 4; second part spans C922–K954. 15 disulfides stabilise this stretch: C955/C964, C957/C971, C974/C983, C986/C1002, C1011/C1021, C1013/C1027, C1030/C1039, C1042/C1058, C1061/C1069, C1063/C1079, C1082/C1091, C1094/C1109, C1152/C1200, C1247/C1294, and C1338/C1384. Laminin EGF-like domains are found at residues C955 to P1004, C1011 to P1060, and C1061 to P1111. Ig-like C2-type domains follow at residues P1126–S1222, P1226–E1311, P1319–Q1401, P1410–N1499, P1503–E1585, P1588–T1680, P1690–N1785, P1793–E1878, P1886–N1970, P1973–E2069, P2073–V2163, P2173–S2260, Q2263–T2343, P2349–L2435, and T2446–Q2530. A compositionally biased stretch (polar residues) spans D1388–V1400. 2 disordered regions span residues D1388–N1426 and E1478–R1497. The N-linked (GlcNAc...) asparagine glycan is linked to N1422. 4 cysteine pairs are disulfide-bonded: C1435-C1481, C1527-C1573, C1618-C1663, and C1719-C1767. Over residues C1481–R1497 the composition is skewed to polar residues. A disordered region spans residues N1773 to P1792. Residues P1776–P1788 show a composition bias toward polar residues. Cystine bridges form between C1814–C1861, C1907–C1954, C1998–C2053, C2099–C2147, C2195–C2242, C2284–C2329, C2374–C2420, C2467–C2514, C2713–C2725, C2719–C2736, C2738–C2747, C2754–C2764, C2759–C2773, C2775–C2784, and C2935–C2960. Positions T1880–T1918 are disordered. Residues C1907–T1918 are compositionally biased toward polar residues. N2476 carries an N-linked (GlcNAc...) asparagine glycan. The Laminin G-like 1 domain maps to D2532–C2713. The 168-residue stretch at P2793 to C2960 folds into the Laminin G-like 2 domain. N-linked (GlcNAc...) asparagine glycosylation occurs at N2950. Over residues S2952–S2963 the composition is skewed to low complexity. Positions S2952–E3124 are disordered. 2 stretches are compositionally biased toward acidic residues: residues E2979–T2990 and P2999–T3010. Residues T3011–E3033 show a composition bias toward low complexity. Positions E3034–D3044 are enriched in basic and acidic residues. The segment covering I3049 to T3079 has biased composition (low complexity). The segment covering P3081 to I3094 has biased composition (acidic residues). Intrachain disulfides connect C3141-C3152, C3146-C3162, C3164-C3173, and C3333-C3359. 2 N-linked (GlcNAc...) asparagine glycosylation sites follow: N3143 and N3156. Residues E3180–C3359 enclose the Laminin G-like 3 domain.

In terms of assembly, component of an integrin containing attachment complex, composed of at least pat-2, pat-3, pat-4, pat-6, unc-52, unc-97 and unc-112. In terms of tissue distribution, detected on embryonic and adult body wall muscle cells (at protein level). Found in the basement membrane of all contractile tissues (at protein level). Expressed in gonadal sheath cells and spermatheca.

It is found in the secreted. The protein localises to the extracellular space. The protein resides in the extracellular matrix. Its subcellular location is the basement membrane. It localises to the cytoplasm. It is found in the myofibril. The protein localises to the sarcomere. The protein resides in the m line. Its function is as follows. Component of an integrin containing attachment complex, which is required for muscle development and maintenance. Probable structural role in myofilament assembly and/or attachment of the myofilament lattice to the cell membrane. May be an extracellular anchor for integrin receptors in body wall muscles and myoepithelial sheath cells. During the formation of neuromuscular junctions at the larval stage, negatively regulates membrane protrusion from body wall muscles, probably downstream of the integrin complex formed by pat-2 and pat-3. Involved in ovulation. Required for normal lifespan. The protein is Basement membrane proteoglycan of Caenorhabditis elegans.